Reading from the N-terminus, the 517-residue chain is Crotonobetaine/carnitine--CoA ligase (517 aa).

The protein belongs to the ATP-dependent AMP-binding enzyme family.

It catalyses the reaction 4-(trimethylamino)butanoate + ATP + CoA = 4-(trimethylamino)butanoyl-CoA + AMP + diphosphate. It carries out the reaction crotonobetaine + ATP + CoA = crotonobetainyl-CoA + AMP + diphosphate. The enzyme catalyses (R)-carnitine + ATP + CoA = (R)-carnitinyl-CoA + AMP + diphosphate. Its pathway is amine and polyamine metabolism; carnitine metabolism. Its function is as follows. Catalyzes the transfer of CoA to carnitine, generating the initial carnitinyl-CoA needed for the CaiB reaction cycle. Also has activity toward crotonobetaine and gamma-butyrobetaine. In Salmonella paratyphi A (strain ATCC 9150 / SARB42), this protein is Crotonobetaine/carnitine--CoA ligase.